The primary structure comprises 216 residues: Transmembrane emp24 domain-containing protein eca (216 aa).

The first 20 residues, 1-20 (MRDQFISLALMLCILHSACG), serve as a signal peptide directing secretion. The Lumenal segment spans residues 21–182 (LYFHISETER…FRHTSESTNS (162 aa)). One can recognise a GOLD domain in the interval 30–126 (RKCFIEEVPD…QLRVHLDIQV (97 aa)). The stretch at 134 to 164 (ANVAQKEKLTELQLRIRQLLDQVEQITKEQN) forms a coiled coil. Residues 183 to 203 (RVLWWSLAQTVVLVCMGFWQM) traverse the membrane as a helical segment. The Cytoplasmic portion of the chain corresponds to 204–216 (RHLKSFFEAKKLV). The Prevents secretion from ER signature appears at 213-216 (KKLV).

Belongs to the EMP24/GP25L family.

The protein localises to the endoplasmic reticulum membrane. In terms of biological role, eca and bai are essential, though not redundant, for dorsoventral patterning of the embryo. Specifically required during early embryogenesis for the activity of maternal tkv, while the zygotic tkv is not affected. Involved in Golgi organization. This is Transmembrane emp24 domain-containing protein eca from Drosophila erecta (Fruit fly).